The sequence spans 319 residues: FAD-dependent oxidoreductase FVFD30 (319 aa).

FAD is bound by residues arginine 6, aspartate 18, and lysine 25. NAD(+) is bound by residues lysine 129 and glycine 188. Lysine 129 and glycine 188 together coordinate NADP(+). Aspartate 228 and tyrosine 265 together coordinate FAD. Residue aspartate 228 coordinates 6-hydroxy-FAD. NAD(+) is bound at residue tyrosine 265. Tyrosine 265 is a binding site for NADP(+). A helical transmembrane segment spans residues 281–301; the sequence is GVGYFGVWWGIVIGGWLASLL.

Belongs to the FAD-dependent oxidoreductase family.

Its subcellular location is the membrane. Probable FAD-dependent oxidoreductase that plays a role in the regulation of fruiting body development. In Flammulina velutipes (Agaricus velutipes), this protein is FAD-dependent oxidoreductase FVFD30.